The following is a 311-amino-acid chain: tRNA dimethylallyltransferase 2 (311 aa).

15 to 22 (GPTAVGKT) contributes to the ATP binding site. 17-22 (TAVGKT) contacts substrate. The interaction with substrate tRNA stretch occupies residues 40–43 (DSMQ).

It belongs to the IPP transferase family. As to quaternary structure, monomer. The cofactor is Mg(2+).

The enzyme catalyses adenosine(37) in tRNA + dimethylallyl diphosphate = N(6)-dimethylallyladenosine(37) in tRNA + diphosphate. In terms of biological role, catalyzes the transfer of a dimethylallyl group onto the adenine at position 37 in tRNAs that read codons beginning with uridine, leading to the formation of N6-(dimethylallyl)adenosine (i(6)A). This Syntrophus aciditrophicus (strain SB) protein is tRNA dimethylallyltransferase 2.